We begin with the raw amino-acid sequence, 215 residues long: Small ribosomal subunit protein uS7 (215 aa).

It belongs to the universal ribosomal protein uS7 family. Part of the 30S ribosomal subunit.

Its function is as follows. One of the primary rRNA binding proteins, it binds directly to 16S rRNA where it nucleates assembly of the head domain of the 30S subunit. Is located at the subunit interface close to the decoding center. The polypeptide is Small ribosomal subunit protein uS7 (Thermococcus gammatolerans (strain DSM 15229 / JCM 11827 / EJ3)).